Consider the following 363-residue polypeptide: 3-isopropylmalate dehydrogenase (363 aa).

78–89 is a binding site for NAD(+); sequence GPKWGTGAVRPE. Substrate-binding residues include Arg-96, Arg-106, Arg-135, and Asp-224. Mg(2+) is bound by residues Asp-224, Asp-249, and Asp-253. 288–299 is an NAD(+) binding site; sequence GSAPDLPANKVN.

It belongs to the isocitrate and isopropylmalate dehydrogenases family. Homodimer. The cofactor is Mg(2+). Mn(2+) serves as cofactor.

The protein localises to the cytoplasm. It catalyses the reaction (2R,3S)-3-isopropylmalate + NAD(+) = 4-methyl-2-oxopentanoate + CO2 + NADH. It participates in amino-acid biosynthesis; L-leucine biosynthesis; L-leucine from 3-methyl-2-oxobutanoate: step 3/4. Its function is as follows. Catalyzes the oxidation of 3-carboxy-2-hydroxy-4-methylpentanoate (3-isopropylmalate) to 3-carboxy-4-methyl-2-oxopentanoate. The product decarboxylates to 4-methyl-2 oxopentanoate. This chain is 3-isopropylmalate dehydrogenase (LEU2), found in Cyberlindnera jadinii (Torula yeast).